The sequence spans 199 residues: Probable GTP-binding protein EngB (199 aa).

One can recognise an EngB-type G domain in the interval 22–196 (NWPEFAFSGR…GKFILDLVDS (175 aa)). GTP is bound by residues 30–37 (GRSNVGKS), 57–61 (GRTQS), 75–78 (DLPG), 142–145 (TKVD), and 175–177 (FSA). Mg(2+) contacts are provided by Ser37 and Thr59.

This sequence belongs to the TRAFAC class TrmE-Era-EngA-EngB-Septin-like GTPase superfamily. EngB GTPase family. Mg(2+) serves as cofactor.

Functionally, necessary for normal cell division and for the maintenance of normal septation. The protein is Probable GTP-binding protein EngB of Halothermothrix orenii (strain H 168 / OCM 544 / DSM 9562).